The following is a 204-amino-acid chain: Pro-hevein (204 aa).

The N-terminal stretch at 1–17 (MNIFIVVLLCLTGVAIA) is a signal peptide. Positions 18-60 (EQCGRQAGGKLCPNNLCCSQWGWCGSTDEYCSPDHNCQSNCKD) constitute a Chitin-binding type-1 domain. 4 disulfide bridges follow: Cys-20–Cys-35, Cys-29–Cys-41, Cys-34–Cys-48, and Cys-54–Cys-58. Residues 61-66 (SGEGVG) constitute a propeptide that is removed on maturation. The Barwin domain occupies 68–189 (GSASNVLATY…VNYQFVDCGD (122 aa)). Intrachain disulfides connect Cys-96-Cys-128, Cys-117-Cys-151, and Cys-131-Cys-187.

Proteolytically processed to yield the two chains of the mature protein. Laticifer.

Functionally, N-acetyl-D-glucosamine / N-acetyl-D-neuraminic acid binding lectin. Can inhibit fungal growth. This chain is Pro-hevein (HEV1), found in Hevea brasiliensis (Para rubber tree).